Here is a 71-residue protein sequence, read N- to C-terminus: Exodeoxyribonuclease 7 small subunit (71 aa).

This sequence belongs to the XseB family. Heterooligomer composed of large and small subunits.

Its subcellular location is the cytoplasm. It carries out the reaction Exonucleolytic cleavage in either 5'- to 3'- or 3'- to 5'-direction to yield nucleoside 5'-phosphates.. Its function is as follows. Bidirectionally degrades single-stranded DNA into large acid-insoluble oligonucleotides, which are then degraded further into small acid-soluble oligonucleotides. The protein is Exodeoxyribonuclease 7 small subunit of Clostridium botulinum (strain ATCC 19397 / Type A).